The chain runs to 255 residues: tRNA (guanine-N(7)-)-methyltransferase (255 aa).

The interval 1-31 is disordered; it reads MMHDDPNEAGLPPHNDAIPDETAEGADEVNP. The span at 18-27 shows a compositional bias: acidic residues; it reads IPDETAEGAD. Glu86, Glu111, Asp138, and Asp161 together coordinate S-adenosyl-L-methionine. The active site involves Asp161. Substrate-binding positions include Lys165, Asp197, and 232 to 235; that span reads TKFE.

Belongs to the class I-like SAM-binding methyltransferase superfamily. TrmB family.

The enzyme catalyses guanosine(46) in tRNA + S-adenosyl-L-methionine = N(7)-methylguanosine(46) in tRNA + S-adenosyl-L-homocysteine. Its pathway is tRNA modification; N(7)-methylguanine-tRNA biosynthesis. In terms of biological role, catalyzes the formation of N(7)-methylguanine at position 46 (m7G46) in tRNA. In Burkholderia cenocepacia (strain HI2424), this protein is tRNA (guanine-N(7)-)-methyltransferase.